A 425-amino-acid chain; its full sequence is Putative E3 ubiquitin-protein ligase UBR7 (425 aa).

A UBR-type zinc finger spans residues 44–116; the sequence is EKCSYSQGSV…KNLECKLFPD (73 aa). A PHD-type; atypical zinc finger spans residues 132 to 188; that stretch reads GLYCVCKRPYPDPEDEVPDEMIQCVVCEDWFHGRHLGAIPPESGDFQEMVCQACMRR. The disordered stretch occupies residues 212-269; sequence LPNATGMGDEDVSKPENGAPQDNGLKEDAPEHGRDSVNEVKAEQKNEPCSSSSSESDL. Glycyl lysine isopeptide (Lys-Gly) (interchain with G-Cter in SUMO2) cross-links involve residues Lys-225 and Lys-252. The segment covering 235-257 has biased composition (basic and acidic residues); that stretch reads GLKEDAPEHGRDSVNEVKAEQKN. Ser-264 bears the Phosphoserine mark. Glycyl lysine isopeptide (Lys-Gly) (interchain with G-Cter in SUMO2) cross-links involve residues Lys-274 and Lys-398.

Expressed in testis and sperm (at protein level).

The enzyme catalyses S-ubiquitinyl-[E2 ubiquitin-conjugating enzyme]-L-cysteine + [acceptor protein]-L-lysine = [E2 ubiquitin-conjugating enzyme]-L-cysteine + N(6)-ubiquitinyl-[acceptor protein]-L-lysine.. It participates in protein modification; protein ubiquitination. Its function is as follows. E3 ubiquitin-protein ligase which is a component of the N-end rule pathway. Recognizes and binds to proteins bearing specific N-terminal residues that are destabilizing according to the N-end rule, leading to their ubiquitination and subsequent degradation. The sequence is that of Putative E3 ubiquitin-protein ligase UBR7 (Ubr7) from Mus musculus (Mouse).